The chain runs to 41 residues: uncharacterized protein (41 aa).

The N-terminal stretch at 1–23 (MNFLMRAIFSLLLLFTLSIPVIS) is a signal peptide.

This is an uncharacterized protein from Escherichia coli (strain K12).